The chain runs to 254 residues: Pyridoxine 5'-phosphate synthase (254 aa).

Asn-12 contributes to the 3-amino-2-oxopropyl phosphate binding site. Residue Asp-14–His-15 coordinates 1-deoxy-D-xylulose 5-phosphate. Arg-23 provides a ligand contact to 3-amino-2-oxopropyl phosphate. His-48 serves as the catalytic Proton acceptor. 1-deoxy-D-xylulose 5-phosphate-binding residues include Arg-50 and His-55. Glu-75 serves as the catalytic Proton acceptor. Thr-105 lines the 1-deoxy-D-xylulose 5-phosphate pocket. His-199 functions as the Proton donor in the catalytic mechanism. 3-amino-2-oxopropyl phosphate contacts are provided by residues Gly-200 and Gly-221–Phe-222.

This sequence belongs to the PNP synthase family. As to quaternary structure, homooctamer; tetramer of dimers.

It is found in the cytoplasm. It catalyses the reaction 3-amino-2-oxopropyl phosphate + 1-deoxy-D-xylulose 5-phosphate = pyridoxine 5'-phosphate + phosphate + 2 H2O + H(+). It participates in cofactor biosynthesis; pyridoxine 5'-phosphate biosynthesis; pyridoxine 5'-phosphate from D-erythrose 4-phosphate: step 5/5. Its function is as follows. Catalyzes the complicated ring closure reaction between the two acyclic compounds 1-deoxy-D-xylulose-5-phosphate (DXP) and 3-amino-2-oxopropyl phosphate (1-amino-acetone-3-phosphate or AAP) to form pyridoxine 5'-phosphate (PNP) and inorganic phosphate. This chain is Pyridoxine 5'-phosphate synthase, found in Rhodopseudomonas palustris (strain HaA2).